We begin with the raw amino-acid sequence, 330 residues long: Lipoyl synthase (330 aa).

Residues cysteine 77, cysteine 82, cysteine 88, cysteine 103, cysteine 107, cysteine 110, and serine 317 each contribute to the [4Fe-4S] cluster site. One can recognise a Radical SAM core domain in the interval 89 to 306 (FNHGTATFMI…RSEAEKMGFE (218 aa)).

This sequence belongs to the radical SAM superfamily. Lipoyl synthase family. [4Fe-4S] cluster serves as cofactor.

The protein localises to the cytoplasm. It catalyses the reaction [[Fe-S] cluster scaffold protein carrying a second [4Fe-4S](2+) cluster] + N(6)-octanoyl-L-lysyl-[protein] + 2 oxidized [2Fe-2S]-[ferredoxin] + 2 S-adenosyl-L-methionine + 4 H(+) = [[Fe-S] cluster scaffold protein] + N(6)-[(R)-dihydrolipoyl]-L-lysyl-[protein] + 4 Fe(3+) + 2 hydrogen sulfide + 2 5'-deoxyadenosine + 2 L-methionine + 2 reduced [2Fe-2S]-[ferredoxin]. It functions in the pathway protein modification; protein lipoylation via endogenous pathway; protein N(6)-(lipoyl)lysine from octanoyl-[acyl-carrier-protein]: step 2/2. Functionally, catalyzes the radical-mediated insertion of two sulfur atoms into the C-6 and C-8 positions of the octanoyl moiety bound to the lipoyl domains of lipoate-dependent enzymes, thereby converting the octanoylated domains into lipoylated derivatives. This is Lipoyl synthase from Haemophilus ducreyi (strain 35000HP / ATCC 700724).